The primary structure comprises 559 residues: MGSFRSGVFALSFVVLLLDYFAPAQAASKAIVCQEITVPMCKGIGYNHTYMPNQFNHDTQDEAGMEVHQFWPLVVIQCSLDLKFFLCSMYTPICLPDYRKPLPPCRSVCERAKAGCSPLMRKYGFAWPERMNCDRLPEHGDPDTLCMYYNWTETTTTLPPTHPPKVKTPTSDCDGVCKCREPFVSITRESHPLYNRIKTGQVPNCAMPCFQPYFTQDEKMFVTFWIGLWSILCFISTFTTVATFLIDMERFRYPERPIIFLSACYLFVSIGYVVRLIVGHENVACNKDHIHYETTGPALCTIVFLLIYFFGMASSIWWVILTFTWFLAAGMKWGNEAIASYSQYFHMAAWLIPSVKSIAVLALSSVDGDPVAGICYVGNQNLDNLRGFVLAPLVVYLFSGTMFLLAGFVSLFRIRSVIKQGGTKTDKLEKLMIRIGIFSVLYTVPATIVVACYIYEQHYREHWEKTHNCSCPGDKQRYRPDYAVFMLKYLMCLVVGITSGVWIWSGKTLESWKRFTGRCCRNSKPINASAYSEASRALTPRTGLSNLTLPHKQVPLSHV.

Residues 1–26 form the signal peptide; that stretch reads MGSFRSGVFALSFVVLLLDYFAPAQA. Over 27 to 220 the chain is Extracellular; the sequence is ASKAIVCQEI…QPYFTQDEKM (194 aa). One can recognise an FZ domain in the interval 28 to 149; that stretch reads SKAIVCQEIT…GDPDTLCMYY (122 aa). Intrachain disulfides connect Cys33-Cys94, Cys41-Cys87, Cys78-Cys116, Cys105-Cys146, and Cys109-Cys133. Residue Asn47 is glycosylated (N-linked (GlcNAc...) asparagine). Residue Asn150 is glycosylated (N-linked (GlcNAc...) asparagine). A helical membrane pass occupies residues 221–241; sequence FVTFWIGLWSILCFISTFTTV. Over 242 to 257 the chain is Cytoplasmic; the sequence is ATFLIDMERFRYPERP. Residues 258 to 278 traverse the membrane as a helical segment; that stretch reads IIFLSACYLFVSIGYVVRLIV. Residues 279 to 301 are Extracellular-facing; the sequence is GHENVACNKDHIHYETTGPALCT. A helical transmembrane segment spans residues 302-322; the sequence is IVFLLIYFFGMASSIWWVILT. Over 323–343 the chain is Cytoplasmic; the sequence is FTWFLAAGMKWGNEAIASYSQ. The chain crosses the membrane as a helical span at residues 344 to 364; the sequence is YFHMAAWLIPSVKSIAVLALS. Residues 365–387 lie on the Extracellular side of the membrane; that stretch reads SVDGDPVAGICYVGNQNLDNLRG. A helical membrane pass occupies residues 388–408; the sequence is FVLAPLVVYLFSGTMFLLAGF. The Cytoplasmic segment spans residues 409–434; that stretch reads VSLFRIRSVIKQGGTKTDKLEKLMIR. The helical transmembrane segment at 435–455 threads the bilayer; the sequence is IGIFSVLYTVPATIVVACYIY. Residues 456–483 are Extracellular-facing; that stretch reads EQHYREHWEKTHNCSCPGDKQRYRPDYA. Residue Asn468 is glycosylated (N-linked (GlcNAc...) asparagine). A helical membrane pass occupies residues 484–504; sequence VFMLKYLMCLVVGITSGVWIW. The Cytoplasmic segment spans residues 505–559; sequence SGKTLESWKRFTGRCCRNSKPINASAYSEASRALTPRTGLSNLTLPHKQVPLSHV. The Lys-Thr-X-X-X-Trp motif, mediates interaction with the PDZ domain of Dvl family members signature appears at 507 to 512; sequence KTLESW. The PDZ-binding signature appears at 557 to 559; it reads SHV.

Belongs to the G-protein coupled receptor Fz/Smo family. As to expression, expressed in retina.

The protein localises to the cell membrane. It localises to the golgi apparatus membrane. Receptor for Wnt proteins that functions in the canonical Wnt/beta-catenin signaling pathway. The canonical Wnt/beta-catenin signaling pathway leads to the activation of disheveled proteins, inhibition of GSK-3 kinase, nuclear accumulation of beta-catenin and activation of Wnt target genes. A second signaling pathway involving PKC and calcium fluxes has been seen for some family members, but it is not yet clear if it represents a distinct pathway or if it can be integrated in the canonical pathway, as PKC seems to be required for Wnt-mediated inactivation of GSK-3 kinase. Both pathways seem to involve interactions with G-proteins. May be involved in transduction and intercellular transmission of polarity information during tissue morphogenesis and/or in differentiated tissues. The chain is Frizzled-5 (fzd5) from Xenopus laevis (African clawed frog).